Reading from the N-terminus, the 182-residue chain is Large ribosomal subunit protein uL5c (182 aa).

Belongs to the universal ribosomal protein uL5 family. As to quaternary structure, part of the 50S ribosomal subunit; contacts the 5S rRNA.

Its subcellular location is the plastid. The protein resides in the chloroplast. In terms of biological role, binds 5S rRNA, forms part of the central protuberance of the 50S subunit. This chain is Large ribosomal subunit protein uL5c (rpl5), found in Emiliania huxleyi (Coccolithophore).